The primary structure comprises 311 residues: Haloalkane dehalogenase (311 aa).

The region spanning 30 to 148 (AIVFQHGNPS…WDDFPDEVAQ (119 aa)) is the AB hydrolase-1 domain. Asp107 serves as the catalytic Nucleophile. Glu131 serves as the catalytic Proton donor. The active-site Proton acceptor is His272.

It belongs to the haloalkane dehalogenase family. Type 2 subfamily. In terms of assembly, monomer.

It catalyses the reaction 1-haloalkane + H2O = a halide anion + a primary alcohol + H(+). In terms of biological role, catalyzes hydrolytic cleavage of carbon-halogen bonds in halogenated aliphatic compounds, leading to the formation of the corresponding primary alcohols, halide ions and protons. The polypeptide is Haloalkane dehalogenase (Mycolicibacterium smegmatis (strain ATCC 700084 / mc(2)155) (Mycobacterium smegmatis)).